A 520-amino-acid polypeptide reads, in one-letter code: Maturase K (520 aa).

This sequence belongs to the intron maturase 2 family. MatK subfamily.

The protein localises to the plastid. It is found in the chloroplast. Usually encoded in the trnK tRNA gene intron. Probably assists in splicing its own and other chloroplast group II introns. In Cycas taitungensis (Prince sago), this protein is Maturase K.